We begin with the raw amino-acid sequence, 556 residues long: MSVSAFNRRWAAVILEALTRHGVQHICIAPGSRSTPLTLAAAENRAFIHHTHFDERGLGHLALGLAKASRQPVAVIVTSGTATANLYPALIEAGLTGEKLILLTADRPPELIDCGANQAIRQPGMFASHPAQTISLPRPSQDIPARWLVSTIDQALGALHAGGVHINCPFAEPLYGDMDETGVEWQQQLGNWWQSDKPWLRQALQLESEKQRDWFFWRQKRGVVVAGRMSAAEGKKVAEWAQTLGWPLIGDVLSQTGQPLPCADLWLGNGKAVSELAQAQIVVQLGSSLTGKRVLQWQATCEPDEYWLVDNLPGRLDPAQHCGRRLLSSVERWLELHPAEKRQPWATVIPQLAGQAWQAAVASNEPFGEAQLAQRIRRYLPEQGQLFVGNSLVVRLIDALAQLPAGYPVYSNRGASGIDGLIATAAGVQRASARPTLAIVGDLSALYDLNSLALLRQASAPLVLIVVNNNGGQIFSMLPTPQDERRQFYLMPQDVDFSHAAVMFGLAYHRPDDWPSLDEALAGAWRRAGATVIELAVNETDGAQTLQQLLAQVSRL.

This sequence belongs to the TPP enzyme family. MenD subfamily. In terms of assembly, homodimer. Mg(2+) serves as cofactor. Requires Mn(2+) as cofactor. Thiamine diphosphate is required as a cofactor.

The enzyme catalyses isochorismate + 2-oxoglutarate + H(+) = 5-enolpyruvoyl-6-hydroxy-2-succinyl-cyclohex-3-ene-1-carboxylate + CO2. It functions in the pathway quinol/quinone metabolism; 1,4-dihydroxy-2-naphthoate biosynthesis; 1,4-dihydroxy-2-naphthoate from chorismate: step 2/7. It participates in quinol/quinone metabolism; menaquinone biosynthesis. Its function is as follows. Catalyzes the thiamine diphosphate-dependent decarboxylation of 2-oxoglutarate and the subsequent addition of the resulting succinic semialdehyde-thiamine pyrophosphate anion to isochorismate to yield 2-succinyl-5-enolpyruvyl-6-hydroxy-3-cyclohexene-1-carboxylate (SEPHCHC). This is 2-succinyl-5-enolpyruvyl-6-hydroxy-3-cyclohexene-1-carboxylate synthase from Klebsiella pneumoniae subsp. pneumoniae (strain ATCC 700721 / MGH 78578).